We begin with the raw amino-acid sequence, 1134 residues long: Early transcription factor large subunit homolog (1134 aa).

The Helicase ATP-binding domain occupies 52 to 352 (KGGRAFFPCD…PNGQPLQRQQ (301 aa)). 99–106 (WQTGTGKS) is a binding site for ATP. The DEAH box motif lies at 281-284 (DEIH). Positions 524 to 725 (MMKDILSIIR…EGDKALRKHA (202 aa)) constitute a Helicase C-terminal domain.

It belongs to the DEAD box helicase family. DEAH subfamily.

Its subcellular location is the virion. It carries out the reaction ATP + H2O = ADP + phosphate + H(+). Its function is as follows. Putative initation factor. This African swine fever virus (isolate Pig/Kenya/KEN-50/1950) (ASFV) protein is Early transcription factor large subunit homolog.